The primary structure comprises 121 residues: UPF0102 protein Mvan_2202 (121 aa).

Belongs to the UPF0102 family.

The sequence is that of UPF0102 protein Mvan_2202 from Mycolicibacterium vanbaalenii (strain DSM 7251 / JCM 13017 / BCRC 16820 / KCTC 9966 / NRRL B-24157 / PYR-1) (Mycobacterium vanbaalenii).